The sequence spans 228 residues: Small ribosomal subunit protein uS2c (228 aa).

Belongs to the universal ribosomal protein uS2 family.

It is found in the plastid. Its subcellular location is the chloroplast. In Mesostigma viride (Green alga), this protein is Small ribosomal subunit protein uS2c (rps2).